Consider the following 354-residue polypeptide: Serine/threonine-protein phosphatase 2A activator 2 (354 aa).

It belongs to the PTPA-type PPIase family.

Its subcellular location is the cytoplasm. It carries out the reaction [protein]-peptidylproline (omega=180) = [protein]-peptidylproline (omega=0). Functionally, PPIases accelerate the folding of proteins. It catalyzes the cis-trans isomerization of proline imidic peptide bonds in oligopeptides. Acts as a regulatory subunit for PP2A-like phosphatases modulating their activity or substrate specificity, probably by inducing a conformational change in the catalytic subunit, a direct target of the PPIase. Can reactivate inactive phosphatase PP2A-phosphatase methylesterase complexes (PP2Ai) in presence of ATP and Mg(2+) by dissociating the inactive form from the complex. The protein is Serine/threonine-protein phosphatase 2A activator 2 (RRD2) of Yarrowia lipolytica (strain CLIB 122 / E 150) (Yeast).